A 332-amino-acid chain; its full sequence is Alpha-N-acetylgalactosaminide alpha-2,6-sialyltransferase 6 (332 aa).

The segment at 1–26 (MACPRPLSQCDHTPLPGPPAGHWPLP) is disordered. Residues 1–42 (MACPRPLSQCDHTPLPGPPAGHWPLPLSRRRREMKSNKEQRS) lie on the Cytoplasmic side of the membrane. Residues 43–63 (AVFVILFALITILILYSSSSA) form a helical; Signal-anchor for type II membrane protein membrane-spanning segment. The Lumenal portion of the chain corresponds to 64 to 332 (NEVFHYGSLR…GITFSHPSWT (269 aa)). The N-linked (GlcNAc...) asparagine glycan is linked to Asn97. Cys107 and Cys255 are disulfide-bonded.

It belongs to the glycosyltransferase 29 family.

It localises to the golgi apparatus membrane. The enzyme catalyses a ganglioside GM1b (d18:1(4E)) + CMP-N-acetyl-beta-neuraminate = a ganglioside GD1alpha (d18:1(4E)) + CMP + H(+). It catalyses the reaction N-acetyl-alpha-neuraminosyl-(2-&gt;3)-beta-D-galactosyl-(1-&gt;3)-N-acetyl-beta-D-glucosaminyl-(1-&gt;3)-beta-D-galactosyl-(1-&gt;4)-beta-D-glucosyl-(1&lt;-&gt;1')-N-acyl-sphing-4-enine + CMP-N-acetyl-beta-neuraminate = N-acetyl-alpha-neuraminosyl-(2-&gt;3)-beta-D-galactosyl-(1-&gt;3)-[N-acetyl-alpha-neuraminosyl-(2-&gt;6)]-N-acetyl-beta-D-glucosaminyl-(1-&gt;3)-beta-D-galactosyl-(1-&gt;4)-beta-D-glucosyl-(1&lt;-&gt;1')-N-acyl-sphing-4-enine + CMP + H(+). The catalysed reaction is a globoside MSGG + CMP-N-acetyl-beta-neuraminate = a globoside DSGG + CMP + H(+). It carries out the reaction a ganglioside GD1a (d18:1(4E)) + CMP-N-acetyl-beta-neuraminate = a ganglioside GT1aalpha (d18:1(4E)) + CMP + H(+). The enzyme catalyses a ganglioside GT1b (d18:1(4E)) + CMP-N-acetyl-beta-neuraminate = a ganglioside GQ1balpha (d18:1(4E)) + CMP + H(+). It catalyses the reaction 3-O-[alpha-Neu5Ac-(2-&gt;3)-beta-D-Gal-(1-&gt;3)-alpha-D-GalNAc]-L-Ser-[protein] + CMP-N-acetyl-beta-neuraminate = a 3-O-{alpha-Neu5Ac-(2-&gt;3)-beta-D-Gal-(1-&gt;3)-[alpha-Neu5Ac-(2-&gt;6)]-alpha-D-GalNAc}-L-seryl-[protein] + CMP + H(+). The catalysed reaction is 3-O-[alpha-Neu5Ac-(2-&gt;3)-beta-D-Gal-(1-&gt;3)-alpha-D-GalNAc]-L-Thr-[protein] + CMP-N-acetyl-beta-neuraminate = a 3-O-{alpha-Neu5Ac-(2-&gt;3)-beta-D-Gal-(1-&gt;3)-[alpha-Neu5Ac-(2-&gt;6)]-alpha-D-GalNAc}-L-threonyl-[protein] + CMP + H(+). Transfers the sialyl group (N-acetyl-alpha-neuraminyl or NeuAc) from CMP-NeuAc onto glycoproteins and glycolipids, forming an alpha-2,6-linkage. Produces branched type disialyl structures by transfer of a sialyl group onto the GalNAc or GlcNAc residue inside backbone core chains having a terminal sialic acid with an alpha-2,3-linkage on Gal. ST6GalNAcVI prefers glycolipids to glycoproteins, predominantly catalyzing the biosynthesis of ganglioside GD1alpha from GM1b. Besides GMb1, MSGG and other glycolipids, it shows activity towards sialyl Lc4Cer generating disialyl Lc4Cer, which can lead to the synthesis of disialyl Lewis a (Le(a)), suggested to be a cancer-associated antigen. Also has activity toward GD1a and GT1b, and can generate DSGG (disialylgalactosylgloboside) from MSGG (monosialylgalactosylgloboside). The sequence is that of Alpha-N-acetylgalactosaminide alpha-2,6-sialyltransferase 6 (ST6GALNAC6) from Bos taurus (Bovine).